A 62-amino-acid polypeptide reads, in one-letter code: Large ribosomal subunit protein uL29 (62 aa).

This sequence belongs to the universal ribosomal protein uL29 family.

The polypeptide is Large ribosomal subunit protein uL29 (Vesicomyosocius okutanii subsp. Calyptogena okutanii (strain HA)).